The chain runs to 63 residues: Lantipeptide Flvbeta.a (63 aa).

The propeptide at 1 to 28 is cleaved by FlvT; sequence MSEKNMEKAGVVKADELDEMIDETTGGA. 4 positions are modified to 2,3-didehydrobutyrine; by FlvM2: Thr-30, Thr-33, Thr-38, and Thr-39. The lanthionine (Ser-Cys); by FlvM2 cross-link spans 43–49; sequence SKGLQNC. 2,3-didehydrobutyrine; by FlvM2 is present on residues Thr-54 and Thr-55.

Maturation of FlvA2 peptides involves the enzymatic conversion of Thr, and Ser into dehydrated AA and the formation of thioether bonds with cysteines. Modifications are processed by the flavecin synthetase FlvM2. This is followed by membrane translocation and cleavage of the modified precursor. In terms of processing, contains DL-lanthionine, when coepressed in E.coli with the flavecin synthetase FlvM2.

The protein resides in the secreted. In terms of biological role, lanthionine-containing peptide that does probably not show antibacterial activity, since its analog [+3]Flvbeta.a does not show antibacterial activity against M.luteus. Also does not show antibiotic activity when tested with [Del2]Flvalpha.a, an analog of Flvalpha.a, which is encoded by the same operon than Flvbeta.a. The bactericidal activity of lantibiotics is based on depolarization of energized bacterial cytoplasmic membranes, initiated by the formation of aqueous transmembrane pores. The sequence is that of Lantipeptide Flvbeta.a from Ruminococcus flavefaciens.